Reading from the N-terminus, the 106-residue chain is Iron-sulfur cluster assembly protein CyaY (106 aa).

This sequence belongs to the frataxin family.

Its function is as follows. Involved in iron-sulfur (Fe-S) cluster assembly. May act as a regulator of Fe-S biogenesis. This is Iron-sulfur cluster assembly protein CyaY from Salmonella newport (strain SL254).